A 56-amino-acid polypeptide reads, in one-letter code: Large ribosomal subunit protein bL33 (56 aa).

The protein belongs to the bacterial ribosomal protein bL33 family.

The chain is Large ribosomal subunit protein bL33 from Anaplasma phagocytophilum (strain HZ).